The sequence spans 582 residues: MGKKSRVKTQKSGSGAAAAVSPKEMLNLISELLQKCSNPNSTPGREWEEYVQIRGLVEKIRKKQRGLSVVFDGKREDYFPELMEWCKENGASTDGFELVEFPEEGFGLKATREIKAEELFLWVPRKLLMTVESAKGSVLGPLYSQDRILQAMGNITLAFHLLCERADPNSFWLPYIKTLPNEYDTPLYFNEDEVQYLQSTQAILDVFSQYKNTARQYAYFYKVIQTHPNANKLPLKDSFTFDDYRWAVSSVMTRQNQIPTEDGSRVTLALIPLWDMCNHTNGLITTGYNLEDDRCECVALQDFKSGEQIYIFYGTRSNAEFVIHNGFFFENNLHDRVKIKLGVSKSDRLYAMKAEVLARAGIPTSSVFALHVTEPPISAQLLAFLRVFCMNEDELKGHLIGDHAIDKIFTLGNSEFPVSWENEIKLWTFLEARASLLLKTYKTTVEDDNKVLEQPDMTFHSAMAIKLRRVEKEILEKALKSASDNRKLYSKNSEEGTPLPKYEASNIAFVENSVADSKLPVVLKSLDDEEVKLQEAITISEITENGFLNDKDLLPNGTKSENDSFLAEDNQQETGNAKDFCS.

S-adenosyl-L-methionine is bound by residues Arg-75, 104-106 (EGF), Arg-254, 275-279 (DMCNH), and 325-327 (NGF). The SET domain maps to 94 to 314 (DGFELVEFPE…SGEQIYIFYG (221 aa)). The disordered stretch occupies residues 550–582 (DKDLLPNGTKSENDSFLAEDNQQETGNAKDFCS).

It belongs to the class V-like SAM-binding methyltransferase superfamily. SETD3 actin-histidine methyltransferase family.

Its subcellular location is the cytoplasm. The enzyme catalyses L-histidyl-[protein] + S-adenosyl-L-methionine = N(tele)-methyl-L-histidyl-[protein] + S-adenosyl-L-homocysteine + H(+). Functionally, protein-histidine N-methyltransferase that specifically mediates 3-methylhistidine (tele-methylhistidine) methylation of actin at 'His-73'. Does not have protein-lysine N-methyltransferase activity and probably only catalyzes histidine methylation of actin. The sequence is that of Actin-histidine N-methyltransferase from Xenopus tropicalis (Western clawed frog).